The sequence spans 402 residues: GTPase HflX (402 aa).

One can recognise a Hflx-type G domain in the interval 181–350 (DTVGLIGYTN…MIIEHLNLSI (170 aa)). Residues 187 to 194 (GYTNAGKT), 212 to 216 (FTTLT), 233 to 236 (DTVG), 300 to 303 (NKVD), and 328 to 330 (SAK) each bind GTP. Positions 194 and 214 each coordinate Mg(2+).

It belongs to the TRAFAC class OBG-HflX-like GTPase superfamily. HflX GTPase family. Monomer. Associates with the 50S ribosomal subunit. Requires Mg(2+) as cofactor.

It localises to the cytoplasm. GTPase that associates with the 50S ribosomal subunit and may have a role during protein synthesis or ribosome biogenesis. This is GTPase HflX from Methanocaldococcus jannaschii (strain ATCC 43067 / DSM 2661 / JAL-1 / JCM 10045 / NBRC 100440) (Methanococcus jannaschii).